The chain runs to 397 residues: 2-acyl-1-lysophosphatidylinositol acyltransferase (397 aa).

The HXXXXD motif motif lies at H112–D117.

This sequence belongs to the 1-acyl-sn-glycerol-3-phosphate acyltransferase family.

The protein localises to the lipid droplet. The enzyme catalyses 1-heptadecanoyl-sn-glycero-3-phosphate + octadecanoyl-CoA = 1-heptadecanoyl-2-octadecanoyl-sn-glycero-3-phosphate + CoA. The catalysed reaction is 1-heptadecanoyl-sn-glycero-3-phosphate + tetradecanoyl-CoA = 1-heptadecanoyl-2-tetradecanoyl-sn-glycero-3-phosphate + CoA. It catalyses the reaction 1-heptadecanoyl-sn-glycero-3-phosphate + hexadecanoyl-CoA = 1-heptadecanoyl-2-hexadecanoyl-sn-glycero-3-phosphate + CoA. Functionally, acyltransferase with lysophosphatidic acid acyltransferase (LPAAT) activity. Fatty acyl substrates include 18:0-acyl-CoA, 16:0-acyl-CoA, 17:0-acyl-CoA and 14:0-acyl-CoA. Responsible for the acyl-CoA-dependent introduction of saturated very long chain fatty acids (VLCFAs) into phosphatidylinositol, transferring saturated FAs with 18 to 26 carbon atoms. Responsible for the incorporation of stearate into phosphatidylinositol. Overexpression has an effect on chromosome stability. Regulates phosphorylation and expression of glycerol-3-phosphate acyltransferase SCT1. This Saccharomyces cerevisiae (strain ATCC 204508 / S288c) (Baker's yeast) protein is 2-acyl-1-lysophosphatidylinositol acyltransferase.